Here is a 179-residue protein sequence, read N- to C-terminus: MAVSFSLVGAFKGLSLASSSSFLKGDFGAAFPVAPKFSVSFPLKSPLTIESAHKKGAGSTKNGRDSPGQRLGVKIFGDQVAKPGSIIVRQRGTKFHPGKNVGLGKDHTIFSLIDGLVKFEKFGPDRKKISVYPREVQPENPNSYRNRKRESFRLQRERRKARREGVILQSSVDTCFCCC.

Residues 1–51 constitute a chloroplast transit peptide; it reads MAVSFSLVGAFKGLSLASSSSFLKGDFGAAFPVAPKFSVSFPLKSPLTIES.

Belongs to the bacterial ribosomal protein bL27 family. In terms of assembly, part of the 50S ribosomal subunit.

The protein localises to the plastid. The protein resides in the chloroplast. The protein is Large ribosomal subunit protein bL27c (RPL27) of Nicotiana tabacum (Common tobacco).